Reading from the N-terminus, the 346-residue chain is Selenide, water dikinase (346 aa).

Sec16 is an active-site residue. Sec16 is a non-standard amino acid (selenocysteine). Residues Lys19 and 47 to 49 (TAD) contribute to the ATP site. Asp50 is a binding site for Mg(2+). ATP-binding positions include Asp67, Asp90, and 138–140 (GHS). Mg(2+) is bound at residue Asp90. Asp226 lines the Mg(2+) pocket.

Belongs to the selenophosphate synthase 1 family. Class I subfamily. As to quaternary structure, homodimer. The cofactor is Mg(2+).

The catalysed reaction is hydrogenselenide + ATP + H2O = selenophosphate + AMP + phosphate + 2 H(+). Synthesizes selenophosphate from selenide and ATP. The chain is Selenide, water dikinase from Haemophilus ducreyi (strain 35000HP / ATCC 700724).